A 269-amino-acid polypeptide reads, in one-letter code: Type II iodothyronine deiodinase (269 aa).

Topologically, residues 1 to 7 (MGLLSVD) are lumenal. A helical; Signal-anchor for type III membrane protein membrane pass occupies residues 8 to 28 (LLITLQILPWFFSNCLFLALY). Residues 29 to 269 (DSVVLLKHVI…RUVPTCELIM (241 aa)) are Cytoplasmic-facing. U128 is a catalytic residue. 2 non-standard amino acids (selenocysteine) are found at residues U128 and U261.

This sequence belongs to the iodothyronine deiodinase family. As to quaternary structure, predominantly monomer. Can form homodimers but homodimerization is not essential for enzyme activity.

It localises to the endoplasmic reticulum membrane. The enzyme catalyses 3,3',5-triiodo-L-thyronine + iodide + A + H(+) = L-thyroxine + AH2. It catalyses the reaction 3,3'-diiodo-L-thyronine + iodide + A + H(+) = 3,3',5'-triiodo-L-thyronine + AH2. The catalysed reaction is 3'-iodo-L-thyronine + iodide + A + H(+) = 3',5'-diiodo-L-thyronine + AH2. It carries out the reaction 3,3'-diiodothyronamine + iodide + A + H(+) = 3,3',5'-triiodothyronamine + AH2. The enzyme catalyses 3'-iodothyronamine + iodide + A + H(+) = 3',5'-diiodothyronamine + AH2. Plays a crucial role in the metabolism of thyroid hormones (TH) and has specific roles in TH activation and inactivation by deiodination. Catalyzes the deiodination of L-thyroxine (T4) to 3,5,3'-triiodothyronine (T3), 3,3',5'-triiodothyronine (rT3) to 3,3'-diiodothyronine (3,3'-T2) and 3',5'-diiodothyronine (3',5'-T2) to 3'-monoiodothyronine (3'-T1) via outer-ring deiodination (ORD). Catalyzes the phenolic ring deiodinations of 3,3',5'-triiodothyronamine and 3',5'- diiodothyronamine. The sequence is that of Type II iodothyronine deiodinase (dio2) from Neoceratodus forsteri (Australian lungfish).